The primary structure comprises 370 residues: Pulmonary surfactant-associated protein B (370 aa).

The first 24 residues, 1-24 (MAKSHLPPWLLLLLLPTLCGPGTA), serve as a signal peptide directing secretion. Positions 25 to 184 (VWATSPLACA…PHTQDLSAQR (160 aa)) are excised as a propeptide. The Saposin A-type domain maps to 26-66 (WATSPLACAQGPEFWCQSLEQALQCKALGHCLQEVWGHVGA). Saposin B-type domains lie at 66-148 (ADDL…QPGS), 188-265 (PLPL…SSVD), and 284-359 (QDPE…VATL). Intrachain disulfides connect cysteine 70–cysteine 144, cysteine 73–cysteine 138, cysteine 101–cysteine 113, cysteine 192–cysteine 261, cysteine 195–cysteine 255, cysteine 219–cysteine 230, cysteine 288–cysteine 355, cysteine 291–cysteine 349, and cysteine 314–cysteine 324. A propeptide spanning residues 264 to 370 (VDSIGQVPPT…PLQCIQSPHF (107 aa)) is cleaved from the precursor. N-linked (GlcNAc...) asparagine glycosylation occurs at asparagine 300.

Homodimer; disulfide-linked.

Its subcellular location is the secreted. The protein resides in the extracellular space. The protein localises to the surface film. In terms of biological role, pulmonary surfactant-associated proteins promote alveolar stability by lowering the surface tension at the air-liquid interface in the peripheral air spaces. SP-B increases the collapse pressure of palmitic acid to nearly 70 millinewtons per meter. The chain is Pulmonary surfactant-associated protein B (SFTPB) from Oryctolagus cuniculus (Rabbit).